Reading from the N-terminus, the 222-residue chain is Large ribosomal subunit protein uL3 (222 aa).

Positions 129–150 (HNFRGLPDSHGTERKHRSPGSI) are disordered.

It belongs to the universal ribosomal protein uL3 family. As to quaternary structure, part of the 50S ribosomal subunit. Forms a cluster with proteins L14 and L19.

In terms of biological role, one of the primary rRNA binding proteins, it binds directly near the 3'-end of the 23S rRNA, where it nucleates assembly of the 50S subunit. The sequence is that of Large ribosomal subunit protein uL3 from Acidothermus cellulolyticus (strain ATCC 43068 / DSM 8971 / 11B).